The sequence spans 250 residues: 2,5-dichloro-2,5-cyclohexadiene-1,4-diol dehydrogenase (250 aa).

9–34 (IIVTGGGSGIGRATVELLVASGANVA) provides a ligand contact to NAD(+). Ser141 lines the substrate pocket. The active-site Proton acceptor is the Tyr154.

This sequence belongs to the short-chain dehydrogenases/reductases (SDR) family.

It carries out the reaction 2,5-dichlorocyclohexa-2,5-dien-1,4-diol + NAD(+) = 2,5-dichlorohydroquinone + NADH + H(+). The protein operates within xenobiotic degradation; gamma-hexachlorocyclohexane degradation. Catalyzes the dehydrogenation of 2,5-dichloro-2,5-cyclohexadiene-1,4-diol (2,5-DDOL) to 2,5-dichlorohydroquinone (2,5-DCHQ), a step in the degradation of gamma-hexachlorocyclohexane (gamma-HCH or lindane). Has an essential role in this assimilation pathway that allows S.japonicum UT26 to grow on gamma-HCH as the sole source of carbon and energy. The chain is 2,5-dichloro-2,5-cyclohexadiene-1,4-diol dehydrogenase from Sphingobium indicum (strain DSM 16413 / CCM 7287 / MTCC 6362 / UT26 / NBRC 101211 / UT26S) (Sphingobium japonicum).